A 114-amino-acid chain; its full sequence is Prefoldin subunit 6 (114 aa).

Position 2 is an N-acetylserine (Ser-2).

It belongs to the prefoldin subunit beta family. As to quaternary structure, heterohexamer of two PFD-alpha type and four PFD-beta type subunits.

It localises to the nucleus. Its function is as follows. Binds specifically to cytosolic chaperonin (c-CPN) and transfers target proteins to it. Binds to nascent polypeptide chain and promotes folding in an environment in which there are many competing pathways for nonnative proteins. This chain is Prefoldin subunit 6 (YKE2), found in Saccharomyces cerevisiae (strain ATCC 204508 / S288c) (Baker's yeast).